A 487-amino-acid polypeptide reads, in one-letter code: RCC1 repeat-containing protein DDB_G0284033 (487 aa).

RCC1 repeat units lie at residues 66–127 (SNKV…FSGY), 207–259 (RSLI…ALSN), 260–313 (DGKL…ALTS), 373–426 (NGNI…IVET), and 428–483 (DGRF…SLNS).

The chain is RCC1 repeat-containing protein DDB_G0284033 from Dictyostelium discoideum (Social amoeba).